We begin with the raw amino-acid sequence, 289 residues long: tRNA pseudouridine synthase B (289 aa).

D38 (nucleophile) is an active-site residue.

Belongs to the pseudouridine synthase TruB family. Type 1 subfamily.

It catalyses the reaction uridine(55) in tRNA = pseudouridine(55) in tRNA. Its function is as follows. Responsible for synthesis of pseudouridine from uracil-55 in the psi GC loop of transfer RNAs. This is tRNA pseudouridine synthase B from Clostridium kluyveri (strain ATCC 8527 / DSM 555 / NBRC 12016 / NCIMB 10680 / K1).